The chain runs to 257 residues: Ribonuclease HII (257 aa).

In terms of domain architecture, RNase H type-2 spans 71–257; that stretch reads ELIAGIDEVG…EPIKSMVNFK (187 aa). Positions 77, 78, and 169 each coordinate a divalent metal cation.

The protein belongs to the RNase HII family. It depends on Mn(2+) as a cofactor. Mg(2+) serves as cofactor.

The protein resides in the cytoplasm. It carries out the reaction Endonucleolytic cleavage to 5'-phosphomonoester.. Its function is as follows. Endonuclease that specifically degrades the RNA of RNA-DNA hybrids. This is Ribonuclease HII (rnhB) from Lactococcus lactis subsp. cremoris (strain MG1363).